Reading from the N-terminus, the 469-residue chain is uncharacterized protein (469 aa).

Positions 1–19 are cleaved as a signal peptide; it reads MRINFVLLITLILPWFVSG. Helical transmembrane passes span 199–219, 236–256, 283–303, 305–325, 338–358, 386–406, and 413–433; these read IKSTLLAISMFLGFITLTWLL, AFWVFIFVFTHSYQVYSMVAI, AYTSFLLVLCFGLGITKPALV, YYVYLAFVAFVQGLFVTFAPL, ILLKLIWNIYTFVYYGLPFFA, IALAAVTVSNCLFLGVVRPLL, and GFQLITSCITFVDFLVFAFLF.

It is found in the membrane. This is an uncharacterized protein from Schizosaccharomyces pombe (strain 972 / ATCC 24843) (Fission yeast).